A 207-amino-acid polypeptide reads, in one-letter code: Strobilurin A biosynthesis cluster protein r1 (207 aa).

The next 2 membrane-spanning stretches (helical) occupy residues 108-128 (FIFP…LLYL) and 169-189 (NLTT…PFWI).

It is found in the membrane. It participates in mycotoxin biosynthesis. Its function is as follows. Part of the gene cluster that mediates the biosynthesis of strobilurin A, an antifungal polyketide that contains a key beta-methoxyacrylate toxophore that targets the complex III of the mitochondrial electron transport chain. Strobilurin biosynthesis begins with construction of benzoyl CoA by step-wise elimination of ammonia from phenylalanine by the phenylalanine ammonia-lyase str11, oxygenation by str8 and retro-Claisen reaction to form benzoic acid, which is activated to its CoA thiolester benzoyl CoA by the dedicated CoA ligase str10. Benzoyl CoA forms the starter unit for the highly reducing polyketide synthase stpks1 that produces the polyketide prestrobilutin A. The FAD-dependent oxygenase str9 then catalyzes the key oxidative rearrangement responsible for the creation of the beta-methoxyacrylate toxophore. Str9 performs epoxidation of the 2,3 olefin of prestrobilutin A, followed by Meinwald rearrangement to furnish the aldehyde intermediate. Rapid enolization of the aldehyde intermediate would give the beta-methoxyacrylate skeleton and methylations catalyzed by str2 and str3 complete the synthesis and lead to the production of strobilurin A. The short-chain dehydrogenase stl2 and the dehydrogenase str4 play a role in the shunt pathway leading to the production of bolineol. The cluster encodes no obvious halogenase gene that could be involved in production of strobilurin B, nor any obvious dimethylallyl-transferase that could be involved in the production of strobilurin G. It is possible that unknown proteins encoded in, or near, the cluster (such as str1 or stl1) may form new classes of halogenases or dimethylally-transferases, or that the responsible genes are located elsewhere on the genome. Similarly, proteins encoded by str5/str6 hydrolases appear to have no chemical role in the biosynthesis of strobilurin A. Finally, no obvious self-resistance gene is found within the cluster. The sequence is that of Strobilurin A biosynthesis cluster protein r1 from Strobilurus tenacellus.